We begin with the raw amino-acid sequence, 549 residues long: Myotubularin-related protein 9 (549 aa).

Position 1 is an N-acetylmethionine (Met-1). The GRAM domain maps to 4 to 99 (AELIKTPRVD…LNIASSIEAL (96 aa)). The 376-residue stretch at 123–498 (GWHSFLPEQE…QSLQLWEGIF (376 aa)) folds into the Myotubularin phosphatase domain. Residues 508-542 (LDEAYEEMVNIIEYNKELQAKVNLLRRQLAELETE) are a coiled coil. Ser-548 is modified (phosphoserine).

Belongs to the protein-tyrosine phosphatase family. Non-receptor class myotubularin subfamily. In terms of assembly, homodimer. Heterodimer (via C-terminus) with lipid phosphatase MTMR6 (via C-terminus). Heterodimer (via coiled coil domain) with lipid phosphatase MTMR7 (via C-terminus). Heterodimer with lipid phosphatase MTMR8.

The protein localises to the cytoplasm. It is found in the cell projection. Its subcellular location is the ruffle membrane. It localises to the perinuclear region. The protein resides in the endoplasmic reticulum. Acts as an adapter for myotubularin-related phosphatases. Increases lipid phosphatase MTMR6 catalytic activity, specifically towards phosphatidylinositol 3,5-bisphosphate, and MTMR6 binding affinity for phosphorylated phosphatidylinositols. Positively regulates lipid phosphatase MTMR7 catalytic activity. Increases MTMR8 catalytic activity towards phosphatidylinositol 3-phosphate. The formation of the MTMR6-MTMR9 complex, stabilizes both MTMR6 and MTMR9 protein levels. Stabilizes MTMR8 protein levels. Plays a role in the late stages of macropinocytosis possibly by regulating MTMR6-mediated dephosphorylation of phosphatidylinositol 3-phosphate in membrane ruffles. Negatively regulates autophagy, in part via its association with MTMR8. Negatively regulates DNA damage-induced apoptosis, in part via its association with MTMR6. Does not bind mono-, di- and tri-phosphorylated phosphatidylinositols, phosphatidic acid and phosphatidylserine. The protein is Myotubularin-related protein 9 (MTMR9) of Bos taurus (Bovine).